A 311-amino-acid polypeptide reads, in one-letter code: Elongation factor Ts (311 aa).

Residues 81-84 (TDFV) form an involved in Mg(2+) ion dislocation from EF-Tu region.

It belongs to the EF-Ts family.

Its subcellular location is the cytoplasm. Associates with the EF-Tu.GDP complex and induces the exchange of GDP to GTP. It remains bound to the aminoacyl-tRNA.EF-Tu.GTP complex up to the GTP hydrolysis stage on the ribosome. The sequence is that of Elongation factor Ts from Trichlorobacter lovleyi (strain ATCC BAA-1151 / DSM 17278 / SZ) (Geobacter lovleyi).